The sequence spans 228 residues: Cytochrome c oxidase subunit 2 (228 aa).

Residues 1 to 26 are Mitochondrial intermembrane-facing; sequence MSQWFQLGLQNGNSPLMEQLIFFHDH. Residues 27–48 form a helical membrane-spanning segment; the sequence is ALLVVILITSLVGFFLAALFSN. Residues 49-62 are Mitochondrial matrix-facing; it reads KFLHRYLLDGQAIE. A helical transmembrane segment spans residues 63–82; it reads TVWTVIPAIILVAIALPSIR. At 83 to 228 the chain is on the mitochondrial intermembrane side; it reads LLYLIDEIHN…FLKWLELQIS (146 aa). Residues His161, Cys196, Glu198, Cys200, His204, and Met207 each coordinate Cu cation. Glu198 contributes to the Mg(2+) binding site.

Belongs to the cytochrome c oxidase subunit 2 family. In terms of assembly, component of the cytochrome c oxidase (complex IV, CIV), a multisubunit enzyme composed of a catalytic core of 3 subunits and several supernumerary subunits. The complex exists as a monomer or a dimer and forms supercomplexes (SCs) in the inner mitochondrial membrane with ubiquinol-cytochrome c oxidoreductase (cytochrome b-c1 complex, complex III, CIII). It depends on Cu cation as a cofactor.

The protein localises to the mitochondrion inner membrane. The enzyme catalyses 4 Fe(II)-[cytochrome c] + O2 + 8 H(+)(in) = 4 Fe(III)-[cytochrome c] + 2 H2O + 4 H(+)(out). Component of the cytochrome c oxidase, the last enzyme in the mitochondrial electron transport chain which drives oxidative phosphorylation. The respiratory chain contains 3 multisubunit complexes succinate dehydrogenase (complex II, CII), ubiquinol-cytochrome c oxidoreductase (cytochrome b-c1 complex, complex III, CIII) and cytochrome c oxidase (complex IV, CIV), that cooperate to transfer electrons derived from NADH and succinate to molecular oxygen, creating an electrochemical gradient over the inner membrane that drives transmembrane transport and the ATP synthase. Cytochrome c oxidase is the component of the respiratory chain that catalyzes the reduction of oxygen to water. Electrons originating from reduced cytochrome c in the intermembrane space (IMS) are transferred via the dinuclear copper A center (CU(A)) of subunit 2 and heme A of subunit 1 to the active site in subunit 1, a binuclear center (BNC) formed by heme A3 and copper B (CU(B)). The BNC reduces molecular oxygen to 2 water molecules using 4 electrons from cytochrome c in the IMS and 4 protons from the mitochondrial matrix. This Artemia franciscana (Brine shrimp) protein is Cytochrome c oxidase subunit 2 (COII).